The sequence spans 111 residues: MSRQNLEEIIQTGIADTELSTEISTAIKRPRKYKVLLLNDDYTPMDFVVEVLKHFFHLNEEVAIQVMLQVHFQGKGVCGVFTRDIAETKVALVNEYARMNQHPLLSSMEPE.

The protein belongs to the ClpS family. As to quaternary structure, binds to the N-terminal domain of the chaperone ClpA.

Involved in the modulation of the specificity of the ClpAP-mediated ATP-dependent protein degradation. The polypeptide is ATP-dependent Clp protease adapter protein ClpS (Legionella pneumophila (strain Corby)).